The sequence spans 358 residues: MINLFLYCRSGYEKECAAEIQHRAAELEIGGFVKTNKKDGYVIFQCFQAGDANILAQKIKLDSLIFARQMFAAKELLKNLPEHDRITPIMEALSDVRNAGELRVETPDTNEAKERTAFCRKFTVPLRQKLKNAGNLLKKENSSRPIIHVCFVASGTAYVGFSFSNNSSPYPMGIPRLKMASDAPSRSTLKLDEAFIHFIPEEEQEQRLSSGMNAVDLGACPGGWTYQLVRRGMFVAAVDNGPMDEGLMETGQVKHYQADGFRFEPPRKNIYWLVCDMIEKPSRVAELIEAWAINGWFKEAMFNLKLPMKSRYQDVSTILETMATVLEENEIKNFSIKCKHLYHDRDEVTVYLSLNPTQ.

S-adenosyl-L-methionine-binding positions include serine 187, 220–223 (CPGG), aspartate 239, aspartate 259, and aspartate 276. Lysine 305 serves as the catalytic Proton acceptor.

It belongs to the class I-like SAM-binding methyltransferase superfamily. RNA methyltransferase RlmE family. RlmM subfamily. As to quaternary structure, monomer.

It localises to the cytoplasm. The enzyme catalyses cytidine(2498) in 23S rRNA + S-adenosyl-L-methionine = 2'-O-methylcytidine(2498) in 23S rRNA + S-adenosyl-L-homocysteine + H(+). In terms of biological role, catalyzes the 2'-O-methylation at nucleotide C2498 in 23S rRNA. The sequence is that of Ribosomal RNA large subunit methyltransferase M from Shewanella woodyi (strain ATCC 51908 / MS32).